We begin with the raw amino-acid sequence, 167 residues long: Gametocyte-specific factor 1 (167 aa).

Phosphoserine is present on Ser8. 2 CHHC U11-48K-type zinc fingers span residues 14 to 41 and 48 to 75; these read LLQC…RKNH and LATC…DDRS. The Zn(2+) site is built by Cys17, His23, His33, Cys37, Cys51, His57, His67, and Cys71.

Belongs to the UPF0224 (FAM112) family.

The protein localises to the cytoplasm. Its function is as follows. Required for spermatogenesis and is involved in the suppression of retrotransposon transcription in male germ cells. This is Gametocyte-specific factor 1 (GTSF1) from Homo sapiens (Human).